Reading from the N-terminus, the 152-residue chain is ARL14 effector protein-like (152 aa).

The segment at 1–21 (MNEQSEKNNSIQERHTDHSFP) is disordered.

This chain is ARL14 effector protein-like (ARL14EPL), found in Homo sapiens (Human).